The chain runs to 777 residues: Lon protease (777 aa).

One can recognise a Lon N-terminal domain in the interval 11–204; it reads IPVLPLRDVV…FLMAIMESEI (194 aa). 356-363 lines the ATP pocket; sequence GPPGVGKT. In terms of domain architecture, Lon proteolytic spans 592 to 773; sequence TNQIGQVIGL…EEVLKLSLEK (182 aa). Catalysis depends on residues Ser-679 and Lys-722.

The protein belongs to the peptidase S16 family. Homohexamer. Organized in a ring with a central cavity.

The protein localises to the cytoplasm. It catalyses the reaction Hydrolysis of proteins in presence of ATP.. In terms of biological role, ATP-dependent serine protease that mediates the selective degradation of mutant and abnormal proteins as well as certain short-lived regulatory proteins. Required for cellular homeostasis and for survival from DNA damage and developmental changes induced by stress. Degrades polypeptides processively to yield small peptide fragments that are 5 to 10 amino acids long. Binds to DNA in a double-stranded, site-specific manner. This is Lon protease from Buchnera aphidicola subsp. Acyrthosiphon pisum (strain APS) (Acyrthosiphon pisum symbiotic bacterium).